A 100-amino-acid polypeptide reads, in one-letter code: Large ribosomal subunit protein uL23 (100 aa).

Belongs to the universal ribosomal protein uL23 family. Part of the 50S ribosomal subunit. Contacts protein L29, and trigger factor when it is bound to the ribosome.

Functionally, one of the early assembly proteins it binds 23S rRNA. One of the proteins that surrounds the polypeptide exit tunnel on the outside of the ribosome. Forms the main docking site for trigger factor binding to the ribosome. The protein is Large ribosomal subunit protein uL23 of Thermosynechococcus vestitus (strain NIES-2133 / IAM M-273 / BP-1).